A 207-amino-acid polypeptide reads, in one-letter code: Glutathione S-transferase 4 (207 aa).

Positions 2–79 constitute a GST N-terminal domain; it reads PNYKLLYFDA…YLARKFGLAG (78 aa). Glutathione is bound by residues Tyr8, Trp39, Lys43, 49–51, and 63–64; these read GQL and QS. Residues 81–207 form the GST C-terminal domain; sequence TAEEEAYADS…YVATRKDSIV (127 aa).

Belongs to the GST superfamily. Sigma family.

The enzyme catalyses RX + glutathione = an S-substituted glutathione + a halide anion + H(+). Functionally, conjugation of reduced glutathione to a wide number of exogenous and endogenous hydrophobic electrophiles. May play a role in the detoxification of reactive oxygen species produced during pathogenic bacterial infection. This is Glutathione S-transferase 4 from Caenorhabditis elegans.